The primary structure comprises 412 residues: Putative membrane protein 337L (412 aa).

N-linked (GlcNAc...) asparagine; by host glycosylation is found at Asn171, Asn186, Asn247, and Asn271. A helical membrane pass occupies residues 387–407 (VLITGIAVTGVAVLLFLLLMF).

Belongs to the IIV-6 337L family.

Its subcellular location is the virion membrane. The sequence is that of Putative membrane protein 337L from Acheta domesticus (House cricket).